We begin with the raw amino-acid sequence, 240 residues long: Inhibitor of growth protein 5 (240 aa).

Residues 115-165 (MDGSDFESTGARSLKKGRSQKEKRSSRGRGRRTSEEDTPKKKKHKSGSEFT) form a disordered region. Position 118 is a phosphoserine (Ser-118). Arg-126 is modified (omega-N-methylarginine). Residues 186–235 (PTYCLCHQVSYGEMIGCDNPDCPIEWFHFACVDLTTKPKGKWFCPRCVQE) form a PHD-type zinc finger. Residues Cys-189, Cys-191, Cys-202, Cys-207, His-213, Cys-216, Cys-229, and Cys-232 each coordinate Zn(2+).

This sequence belongs to the ING family. In terms of assembly, component of the HBO1 complex composed of KAT7/HBO1, MEAF6, ING5, and one scaffold subunit: complexes containing BRPF scaffold (BRPF1, BRD1/BRPF2 or BRPF3) direct KAT7/HBO1 specificity towards H3K14ac, while complexes containing JADE scaffold (JADE1, JADE2 and JADE3) mediate acetylation of histone H4. Component of the MOZ/MORF complex composed at least of ING5, KAT6A, KAT6B, MEAF6 and one of BRPF1, BRD1/BRPF2 and BRPF3. Interacts with H3K4me3 and to a lesser extent with H3K4me2. Interacts with EP300 and p53/TP53. Interacts with INCA1.

It localises to the nucleus. Its subcellular location is the chromosome. Functionally, component of the HBO1 complex, which specifically mediates acetylation of histone H3 at 'Lys-14' (H3K14ac) and, to a lower extent, acetylation of histone H4. Component of the MOZ/MORF complex which has a histone H3 acetyltransferase activity. Through chromatin acetylation it may regulate DNA replication and may function as a transcriptional coactivator. Inhibits cell growth, induces a delay in S-phase progression and enhances Fas-induced apoptosis in an INCA1-dependent manner. This Mus musculus (Mouse) protein is Inhibitor of growth protein 5 (Ing5).